A 947-amino-acid polypeptide reads, in one-letter code: Protein translocase subunit SecA 1 (947 aa).

Residues Gln87, 105–109, and Asp525 contribute to the ATP site; that span reads GEGKT. Residues 907 to 937 form a disordered region; sequence DDADKAARDPNRPETWGKVGRNEDCPCNSGK. Over residues 908–918 the composition is skewed to basic and acidic residues; it reads DADKAARDPNR. Zn(2+)-binding residues include Cys931, Cys933, Cys942, and His943.

It belongs to the SecA family. In terms of assembly, monomer and homodimer. Part of the essential Sec protein translocation apparatus which comprises SecA, SecYEG and auxiliary proteins SecDF-YajC and YidC. Zn(2+) serves as cofactor.

Its subcellular location is the cell inner membrane. It is found in the cytoplasm. The catalysed reaction is ATP + H2O + cellular proteinSide 1 = ADP + phosphate + cellular proteinSide 2.. Functionally, part of the Sec protein translocase complex. Interacts with the SecYEG preprotein conducting channel. Has a central role in coupling the hydrolysis of ATP to the transfer of proteins into and across the cell membrane, serving both as a receptor for the preprotein-SecB complex and as an ATP-driven molecular motor driving the stepwise translocation of polypeptide chains across the membrane. The sequence is that of Protein translocase subunit SecA 1 from Rhodopseudomonas palustris (strain BisA53).